The primary structure comprises 495 residues: Aspartyl/glutamyl-tRNA(Asn/Gln) amidotransferase subunit B (495 aa).

The protein belongs to the GatB/GatE family. GatB subfamily. As to quaternary structure, heterotrimer of A, B and C subunits.

The catalysed reaction is L-glutamyl-tRNA(Gln) + L-glutamine + ATP + H2O = L-glutaminyl-tRNA(Gln) + L-glutamate + ADP + phosphate + H(+). The enzyme catalyses L-aspartyl-tRNA(Asn) + L-glutamine + ATP + H2O = L-asparaginyl-tRNA(Asn) + L-glutamate + ADP + phosphate + 2 H(+). Allows the formation of correctly charged Asn-tRNA(Asn) or Gln-tRNA(Gln) through the transamidation of misacylated Asp-tRNA(Asn) or Glu-tRNA(Gln) in organisms which lack either or both of asparaginyl-tRNA or glutaminyl-tRNA synthetases. The reaction takes place in the presence of glutamine and ATP through an activated phospho-Asp-tRNA(Asn) or phospho-Glu-tRNA(Gln). The polypeptide is Aspartyl/glutamyl-tRNA(Asn/Gln) amidotransferase subunit B (Methylocella silvestris (strain DSM 15510 / CIP 108128 / LMG 27833 / NCIMB 13906 / BL2)).